Reading from the N-terminus, the 603-residue chain is DNA ligase (603 aa).

Glutamate 262 provides a ligand contact to ATP. Lysine 264 functions as the N6-AMP-lysine intermediate in the catalytic mechanism. Positions 269, 285, 315, 355, 432, and 438 each coordinate ATP.

The protein belongs to the ATP-dependent DNA ligase family. It depends on Mg(2+) as a cofactor.

It carries out the reaction ATP + (deoxyribonucleotide)n-3'-hydroxyl + 5'-phospho-(deoxyribonucleotide)m = (deoxyribonucleotide)n+m + AMP + diphosphate.. DNA ligase that seals nicks in double-stranded DNA during DNA replication, DNA recombination and DNA repair. This is DNA ligase from Caldivirga maquilingensis (strain ATCC 700844 / DSM 13496 / JCM 10307 / IC-167).